The chain runs to 143 residues: Large ribosomal subunit protein uL13 (143 aa).

It belongs to the universal ribosomal protein uL13 family. Part of the 50S ribosomal subunit.

This protein is one of the early assembly proteins of the 50S ribosomal subunit, although it is not seen to bind rRNA by itself. It is important during the early stages of 50S assembly. The protein is Large ribosomal subunit protein uL13 of Thermoanaerobacter pseudethanolicus (strain ATCC 33223 / 39E) (Clostridium thermohydrosulfuricum).